The sequence spans 198 residues: Protein GrpE (198 aa).

Over residues 1 to 21 (MMKKAEDPLQDREGTIQEHTE) the composition is skewed to basic and acidic residues. The interval 1–56 (MMKKAEDPLQDREGTIQEHTEGQAGTAAADQSAAVETPESRIAGLEREVQAEKEQN) is disordered. Residues 22 to 34 (GQAGTAAADQSAA) show a composition bias toward low complexity. Over residues 44–56 (GLEREVQAEKEQN) the composition is skewed to basic and acidic residues.

It belongs to the GrpE family. Homodimer.

It is found in the cytoplasm. Its function is as follows. Participates actively in the response to hyperosmotic and heat shock by preventing the aggregation of stress-denatured proteins, in association with DnaK and GrpE. It is the nucleotide exchange factor for DnaK and may function as a thermosensor. Unfolded proteins bind initially to DnaJ; upon interaction with the DnaJ-bound protein, DnaK hydrolyzes its bound ATP, resulting in the formation of a stable complex. GrpE releases ADP from DnaK; ATP binding to DnaK triggers the release of the substrate protein, thus completing the reaction cycle. Several rounds of ATP-dependent interactions between DnaJ, DnaK and GrpE are required for fully efficient folding. This Chlorobium luteolum (strain DSM 273 / BCRC 81028 / 2530) (Pelodictyon luteolum) protein is Protein GrpE.